A 623-amino-acid chain; its full sequence is Adenine deaminase 2 (623 aa).

Belongs to the metallo-dependent hydrolases superfamily. Adenine deaminase family. Mn(2+) is required as a cofactor.

The enzyme catalyses adenine + H2O + H(+) = hypoxanthine + NH4(+). This chain is Adenine deaminase 2, found in Jannaschia sp. (strain CCS1).